We begin with the raw amino-acid sequence, 792 residues long: Glucocorticoid receptor (792 aa).

Residues 1–15 (MDSKESLAPPGRDEV) show a composition bias toward basic and acidic residues. The tract at residues 1–25 (MDSKESLAPPGRDEVPSSLLGRGRG) is disordered. Residues 1 to 436 (MDSKESLAPP…STATGPPPKL (436 aa)) form a modulating region. Omega-N-methylarginine is present on R24. The residue at position 46 (S46) is a Phosphoserine. The tract at residues 67–98 (SKGSASNAQQQQQQQQQQQQQQQQQPQPDLSK) is disordered. Residues 75 to 94 (QQQQQQQQQQQQQQQQQPQP) are compositionally biased toward low complexity. 3 positions are modified to phosphoserine: S131, S152, and S159. Residues 148 to 162 (NRSTSRPENPKSSTP) show a composition bias toward polar residues. Residues 148 to 201 (NRSTSRPENPKSSTPAAGCATPTEKEFPQTHSDPSSEQQNRKSQPGTNGGSVKL) form a disordered region. Position 168 is a phosphothreonine (T168). Polar residues predominate over residues 176 to 193 (QTHSDPSSEQQNRKSQPG). A phosphoserine mark is found at S221, S229, S243, and S284. Glycyl lysine isopeptide (Lys-Gly) (interchain with G-Cter in SUMO); alternate cross-links involve residues K294 and K310. Residues K294 and K310 each participate in a glycyl lysine isopeptide (Lys-Gly) (interchain with G-Cter in SUMO2); alternate cross-link. S324 and S421 each carry phosphoserine. Positions 434–509 (PKLCLVCSDE…AGMNLEARKT (76 aa)) form a DNA-binding region, nuclear receptor. K435 is covalently cross-linked (Glycyl lysine isopeptide (Lys-Gly) (interchain with G-Cter in ubiquitin)). 2 NR C4-type zinc fingers span residues 437–457 (CLVC…CGSC) and 473–497 (CAGR…YRKC). An N6-acetyllysine mark is found at K496, K508, K510, and K511. The tract at residues 501–792 (GMNLEARKTK…NIKKLLFHQK (292 aa)) is interaction with CLOCK. The tract at residues 503–538 (NLEARKTKKKIKGIQQATAGVSQDTSENANKTIVPA) is hinge. Residues 539–773 (ALPQLTPTLV…FPEMLAEIIT (235 aa)) form the NR LBD domain. The interaction with CRY1 stretch occupies residues 547 to 712 (LVSLLEVIEP…EIRMTYIKEL (166 aa)). K718 is covalently cross-linked (Glycyl lysine isopeptide (Lys-Gly) (interchain with G-Cter in SUMO)).

This sequence belongs to the nuclear hormone receptor family. NR3 subfamily. As to quaternary structure, heteromultimeric cytoplasmic complex with HSP90AA1, HSPA1A/HSPA1B, and FKBP5 or another immunophilin such as PPID, STIP1, or the immunophilin homolog PPP5C. Upon ligand binding FKBP5 dissociates from the complex and FKBP4 takes its place, thereby linking the complex to dynein and mediating transport to the nucleus, where the complex dissociates. Probably forms a complex composed of chaperones HSP90 and HSP70, co-chaperones CDC37, PPP5C, TSC1 and client protein TSC2, CDK4, AKT, RAF1 and NR3C1; this complex does not contain co-chaperones STIP1/HOP and PTGES3/p23. Directly interacts with UNC45A. Binds to DNA as a homodimer, and as heterodimer with NR3C2 or the retinoid X receptor. Binds STAT5A and STAT5B homodimers and heterodimers. Interacts with NRIP1, POU2F1, POU2F2 and TRIM28. Interacts with several coactivator complexes, including the SMARCA4 complex, CREBBP/EP300, TADA2L (Ada complex) and p160 coactivators such as NCOA2 and NCOA6. Interaction with BAG1 inhibits transactivation. Interacts with HEXIM1 and TGFB1I1. Interacts with NCOA1. Interacts with NCOA3, SMARCA4, SMARCC1, SMARCD1, and SMARCE1. Interacts with CLOCK, CRY1 and CRY2 in a ligand-dependent fashion. Interacts with CIART. Interacts with RWDD3. Interacts with UBE2I/UBC9 and this interaction is enhanced in the presence of RWDD3. Interacts with GRIP1. Interacts with NR4A3 (via nuclear receptor DNA-binding domain), represses transcription activity of NR4A3 on the POMC promoter Nur response element (NurRE). Directly interacts with PNRC2 to attract and form a complex with UPF1 and DCP1A; the interaction leads to rapid mRNA degradation. Interacts with GSK3B. Interacts with FNIP1 and FNIP2. Interacts (via C-terminus) with HNRNPU (via C-terminus). Interacts with MCM3AP. Interacts (via domain NR LBD) with HSP90AA1 and HSP90AB1. In the absence of hormonal ligand, interacts with TACC1. Interacts (via NR LBD domain) with ZNF764 (via KRAB domain); the interaction regulates transcription factor activity of NR3C1 by directing its actions toward certain biologic pathways. Post-translationally, acetylation by CLOCK reduces its binding to glucocorticoid response elements and its transcriptional activity. In terms of processing, increased proteasome-mediated degradation in response to glucocorticoids. Phosphorylated in the absence of hormone; becomes hyperphosphorylated in the presence of glucocorticoids. Phosphorylated in the absence of hormone; becomes hyperphosphorylated in the presence of glucocorticoid. The Ser-221, Ser-243 and Ser-421-phosphorylated forms are mainly cytoplasmic, and the Ser-229-phosphorylated form is nuclear. Phosphorylation at Ser-229 increases transcriptional activity. Phosphorylation at Ser-221, Ser-243 and Ser-421 decreases signaling capacity. Phosphorylation at Ser-421 may protect from glucocorticoid-induced apoptosis. Phosphorylation at Ser-221 and Ser-229 is not required in regulation of chromosome segregation. May be dephosphorylated by PPP5C, attenuates NR3C1 action. Post-translationally, sumoylation at Lys-294 and Lys-310 negatively regulates its transcriptional activity. Sumoylation at Lys-718 positively regulates its transcriptional activity in the presence of RWDD3. Sumoylation at Lys-294 and Lys-310 is dispensable whereas sumoylation at Lys-718 is critical for the stimulatory effect of RWDD3 on its transcriptional activity. Heat shock increases sumoylation in a RWDD3-dependent manner. In terms of processing, ubiquitinated. Ubiquitination by UBR5 leads to its degradation: UBR5 specifically recognizes and binds ligand-bound NR3C1 when it is not associated with coactivators (NCOAs). In presence of NCOAs, the UBR5-degron is not accessible, preventing its ubiquitination and degradation. As to expression, expressed in spleen, kidney and liver. Expressed in a circadian manner in the liver. Expressed at highest level in spleen with lesser amounts in kidney and liver.

It is found in the cytoplasm. Its subcellular location is the nucleus. It localises to the mitochondrion. The protein resides in the cytoskeleton. The protein localises to the spindle. It is found in the microtubule organizing center. Its subcellular location is the centrosome. It localises to the chromosome. The protein resides in the nucleoplasm. In terms of biological role, receptor for glucocorticoids (GC). Has a dual mode of action: as a transcription factor that binds to glucocorticoid response elements (GRE), both for nuclear and mitochondrial DNA, and as a modulator of other transcription factors. Affects inflammatory responses, cellular proliferation and differentiation in target tissues. Involved in chromatin remodeling. Plays a role in rapid mRNA degradation by binding to the 5' UTR of target mRNAs and interacting with PNRC2 in a ligand-dependent manner which recruits the RNA helicase UPF1 and the mRNA-decapping enzyme DCP1A, leading to RNA decay. Could act as a coactivator for STAT5-dependent transcription upon growth hormone (GH) stimulation and could reveal an essential role of hepatic GR in the control of body growth. Functionally, has transcriptional activation and repression activity. Mediates glucocorticoid-induced apoptosis. Promotes accurate chromosome segregation during mitosis. May act as a tumor suppressor. May play a negative role in adipogenesis through the regulation of lipolytic and antilipogenic gene expression. Acts as a dominant negative inhibitor of isoform 1. Has intrinsic transcriptional activity independent of isoform Alpha when both isoforms are coexpressed. Loses this transcription modulator function on its own. Has no hormone-binding activity. May play a role in controlling glucose metabolism by maintaining insulin sensitivity. Reduces hepatic gluconeogenesis through down-regulation of PEPCK in an isoform Alpha-dependent manner. Directly regulates STAT1 expression in isoform Alpha-independent manner. The protein is Glucocorticoid receptor (Nr3c1) of Mus musculus (Mouse).